A 470-amino-acid polypeptide reads, in one-letter code: Flavin-containing monooxygenase FMO GS-OX-like 6 (470 aa).

Gly17–Gly22 is a binding site for FAD. Residue Gly214–Gly219 participates in NADP(+) binding.

The protein belongs to the FMO family. FAD is required as a cofactor.

Functionally, catalyzes the conversion of methylthioalkyl glucosinolates of any chain length into methylsulfinylalkyl glucosinolates. In Arabidopsis thaliana (Mouse-ear cress), this protein is Flavin-containing monooxygenase FMO GS-OX-like 6.